The sequence spans 200 residues: MASSLTCTGVIWALLSFLSAATSCVGFFMPYWLWGSQLGKPVSFGTFRRCSYPVHDESRQMMVMVEECGRYASFQGIPSTEWRICTIVTGLGCGLLLLVALTALMGCCVSELISRTVGRVAGGIQFLGGLLIGAGCALYPLGWDSEEVRQTCGYISGQFDLGKCEIGWAYYCTGAGAAAAMLLCTWMACFSGKKQKHYPY.

The first 23 residues, 1–23 (MASSLTCTGVIWALLSFLSAATS), serve as a signal peptide directing secretion. 3 helical membrane passes run 84–104 (ICTIVTGLGCGLLLLVALTAL), 123–143 (GIQFLGGLLIGAGCALYPLGW), and 166–186 (IGWAYYCTGAGAAAAMLLCTW).

It belongs to the LHFP family.

It is found in the membrane. The chain is LHFPL tetraspan subfamily member 6 protein from Mus musculus (Mouse).